The primary structure comprises 317 residues: MQNKIKVVFCGTPKIGADVLKALIEMNQVEIVLVISQPDKPIGRKKQIVHTPVKKLALENNLKVVQPNKIGEIYDDLAKLEFDFLITCAFGQFIPTKILKLAKIDSINFHGSLLPKLRGGAPIQYAIKNGDKKTGITIMQMVKQMDAGDYYVQESIDILDSDDSGSLFEKMGHLAYSMCKKYLVDIYNHKFELIKQNEDEVTFCKNISSEEEKINWNNTSLDIFNLIRSLSPSPISYTTINNQRYKIKSSKVIDLDNQNKNAIPGTILGINKQGIVVKTLDKALLILEIQKEGKKMILASNYYLNKLSDLKINDKFD.

Position 112 to 115 (112 to 115 (SLLP)) interacts with (6S)-5,6,7,8-tetrahydrofolate.

The protein belongs to the Fmt family.

It carries out the reaction L-methionyl-tRNA(fMet) + (6R)-10-formyltetrahydrofolate = N-formyl-L-methionyl-tRNA(fMet) + (6S)-5,6,7,8-tetrahydrofolate + H(+). Attaches a formyl group to the free amino group of methionyl-tRNA(fMet). The formyl group appears to play a dual role in the initiator identity of N-formylmethionyl-tRNA by promoting its recognition by IF2 and preventing the misappropriation of this tRNA by the elongation apparatus. In Mycoplasma mycoides subsp. mycoides SC (strain CCUG 32753 / NCTC 10114 / PG1), this protein is Methionyl-tRNA formyltransferase.